Reading from the N-terminus, the 398-residue chain is Elongation factor Tu (398 aa).

One can recognise a tr-type G domain in the interval 10-207 (KIHLNVGTIG…ILDKNIPVPN (198 aa)). The tract at residues 19-26 (GHVDHGKT) is G1. 19 to 26 (GHVDHGKT) provides a ligand contact to GTP. Thr26 lines the Mg(2+) pocket. A G2 region spans residues 60–64 (GITIS). A G3 region spans residues 81–84 (DCPG). GTP contacts are provided by residues 81-85 (DCPGH) and 136-139 (NKAD). The interval 136–139 (NKAD) is G4. The interval 174 to 176 (SAL) is G5.

Belongs to the TRAFAC class translation factor GTPase superfamily. Classic translation factor GTPase family. EF-Tu/EF-1A subfamily. As to quaternary structure, monomer.

It localises to the cytoplasm. The enzyme catalyses GTP + H2O = GDP + phosphate + H(+). Its function is as follows. GTP hydrolase that promotes the GTP-dependent binding of aminoacyl-tRNA to the A-site of ribosomes during protein biosynthesis. The sequence is that of Elongation factor Tu from Carsonella ruddii (strain PV).